The primary structure comprises 264 residues: Dehydrodolichyl diphosphate synthase complex subunit SPAC4D7.04c (264 aa).

It belongs to the UPP synthase family. As to quaternary structure, forms an active dehydrodolichyl diphosphate synthase complex with nus1. Mg(2+) is required as a cofactor.

The protein localises to the endoplasmic reticulum membrane. It carries out the reaction n isopentenyl diphosphate + (2E,6E)-farnesyl diphosphate = a di-trans,poly-cis-polyprenyl diphosphate + n diphosphate. Its pathway is protein modification; protein glycosylation. Functionally, with nus1, forms the dehydrodolichyl diphosphate synthase (DDS) complex, an essential component of the dolichol monophosphate (Dol-P) biosynthetic machinery. Adds multiple copies of isopentenyl pyrophosphate (IPP) to farnesyl pyrophosphate (FPP) to produce dehydrodolichyl diphosphate (Dedol-PP), a precursor of dolichol which is utilized as a sugar carrier in protein glycosylation in the endoplasmic reticulum (ER). This is Dehydrodolichyl diphosphate synthase complex subunit SPAC4D7.04c from Schizosaccharomyces pombe (strain 972 / ATCC 24843) (Fission yeast).